We begin with the raw amino-acid sequence, 462 residues long: Ribosomal protein uS12 methylthiotransferase RimO (462 aa).

The MTTase N-terminal domain occupies 10 to 125; that stretch reads PRIGMVSLGC…VLDAVHRNLP (116 aa). The [4Fe-4S] cluster site is built by C19, C55, C84, C160, C164, and C167. The Radical SAM core domain maps to 146 to 388; the sequence is LTPRHYAYLK…AVAEALSSAK (243 aa). The region spanning 390–462 is the TRAM domain; that stretch reads QRRVGATMQV…RGHDLLAQPI (73 aa).

This sequence belongs to the methylthiotransferase family. RimO subfamily. [4Fe-4S] cluster serves as cofactor.

It is found in the cytoplasm. The enzyme catalyses L-aspartate(89)-[ribosomal protein uS12]-hydrogen + (sulfur carrier)-SH + AH2 + 2 S-adenosyl-L-methionine = 3-methylsulfanyl-L-aspartate(89)-[ribosomal protein uS12]-hydrogen + (sulfur carrier)-H + 5'-deoxyadenosine + L-methionine + A + S-adenosyl-L-homocysteine + 2 H(+). Its function is as follows. Catalyzes the methylthiolation of an aspartic acid residue of ribosomal protein uS12. The protein is Ribosomal protein uS12 methylthiotransferase RimO of Verminephrobacter eiseniae (strain EF01-2).